The sequence spans 499 residues: Calcium/calmodulin-dependent protein kinase type II subunit delta (499 aa).

Ala-2 carries the N-acetylalanine modification. Residues 14 to 272 enclose the Protein kinase domain; sequence YQLFEELGKG…ASEALKHPWI (259 aa). ATP-binding positions include 20 to 28 and Lys-43; that span reads LGKGAFSVV. Residue Asp-136 is the Proton acceptor of the active site. An autoinhibitory domain region spans residues 283–292; the sequence is HRQETVDCLK. A Phosphothreonine; by autocatalysis modification is found at Thr-287. The interval 291–301 is calmodulin-binding; sequence LKKFNARRKLK. Phosphothreonine; by autocatalysis is present on residues Thr-306 and Thr-307. A Phosphoserine modification is found at Ser-315. N6-acetyllysine is present on Lys-318. Residues Ser-319 and Ser-330 each carry the phosphoserine modification. The residue at position 331 (Thr-331) is a Phosphothreonine. Ser-333 carries the post-translational modification Phosphoserine. 2 positions are modified to phosphothreonine: Thr-336 and Thr-337. Phosphoserine occurs at positions 404, 490, and 494.

Belongs to the protein kinase superfamily. CAMK Ser/Thr protein kinase family. CaMK subfamily. CAMK2 is composed of 4 different chains: alpha (CAMK2A), beta (CAMK2B), gamma (CAMK2G), and delta (CAMK2D). The different isoforms assemble into homo- or heteromultimeric holoenzymes composed of 12 subunits with two hexameric rings stacked one on top of the other. Interacts with RRAD CACNB2. Autophosphorylation of Thr-287 following activation by Ca(2+)/calmodulin. Phosphorylation of Thr-287 locks the kinase into an activated state.

The protein resides in the cell membrane. The protein localises to the sarcolemma. It localises to the sarcoplasmic reticulum membrane. It catalyses the reaction L-seryl-[protein] + ATP = O-phospho-L-seryl-[protein] + ADP + H(+). The catalysed reaction is L-threonyl-[protein] + ATP = O-phospho-L-threonyl-[protein] + ADP + H(+). Activated by Ca(2+)/calmodulin. Binding of calmodulin results in conformational change that relieves intrasteric autoinhibition and allows autophosphorylation of Thr-287 which turns the kinase in a constitutively active form and confers to the kinase a Ca(2+)-independent activity. Functionally, calcium/calmodulin-dependent protein kinase involved in the regulation of Ca(2+) homeostatis and excitation-contraction coupling (ECC) in heart by targeting ion channels, transporters and accessory proteins involved in Ca(2+) influx into the myocyte, Ca(2+) release from the sarcoplasmic reticulum (SR), SR Ca(2+) uptake and Na(+) and K(+) channel transport. Targets also transcription factors and signaling molecules to regulate heart function. In its activated form, is involved in the pathogenesis of dilated cardiomyopathy and heart failure. Contributes to cardiac decompensation and heart failure by regulating SR Ca(2+) release via direct phosphorylation of RYR2 Ca(2+) channel on 'Ser-2808'. In the nucleus, phosphorylates the MEF2 repressor HDAC4, promoting its nuclear export and binding to 14-3-3 protein, and expression of MEF2 and genes involved in the hypertrophic program. Is essential for left ventricular remodeling responses to myocardial infarction. In pathological myocardial remodeling acts downstream of the beta adrenergic receptor signaling cascade to regulate key proteins involved in ECC. Regulates Ca(2+) influx to myocytes by binding and phosphorylating the L-type Ca(2+) channel subunit beta-2 CACNB2. In addition to Ca(2+) channels, can target and regulate the cardiac sarcolemmal Na(+) channel Nav1.5/SCN5A and the K+ channel Kv4.3/KCND3, which contribute to arrhythmogenesis in heart failure. Phosphorylates phospholamban (PLN/PLB), an endogenous inhibitor of SERCA2A/ATP2A2, contributing to the enhancement of SR Ca(2+) uptake that may be important in frequency-dependent acceleration of relaxation (FDAR) and maintenance of contractile function during acidosis. May participate in the modulation of skeletal muscle function in response to exercise, by regulating SR Ca(2+) transport through phosphorylation of PLN/PLB and triadin, a ryanodine receptor-coupling factor. In response to interferon-gamma (IFN-gamma) stimulation, catalyzes phosphorylation of STAT1, stimulating the JAK-STAT signaling pathway. In Sus scrofa (Pig), this protein is Calcium/calmodulin-dependent protein kinase type II subunit delta (CAMK2D).